The following is a 509-amino-acid chain: MKKLIIRKTEEIENWRKDIDSEINFIPTMGNLHDGHIKLISTAKNDNSNINLVSIFINPLQFDNKLDLENYPKTIDNDINISFSNGADAIFIPSNEDIYPPNNNISFLKAPIELSSALCGLNRIGHFDGVCTVVYRLLNLIKPKNLYLGEKDWQQLLILKNLVLRKKLNIAIKSIPTQRDFDGIPLSSRNVHLSKNERKLISFFSRELLEAKKNFQKEKKINLKEIIKKLSEKKISIEYLEHLHPYTLQKAKIEDNISLLAGAIRCGETRLIDHVFLMKRRPIIAIDGPAGSGKSTVTKLIAKKLKLLYLDTGAMYRALSWLIIKENIDFKKENKLQNILKDISIVFKSNTSSHQDVYVNNYCVTEEIRSQKISSIVSKISSIKEVREFLVEEQRKIGESGGLVAEGRDIGTTVFPHAELKIFLTASIDERAKRRKSDKNSKDLQEIDLHKLKELIKQRDSEDSNRKISPLIKANDAIEIITDGYSINEVVDKIIDLYNDKIPKESEIK.

The pantoate--beta-alanine ligase stretch occupies residues 1 to 275; it reads MKKLIIRKTE…CGETRLIDHV (275 aa). Residue 29–36 coordinates ATP; it reads MGNLHDGH. The Proton donor role is filled by histidine 36. A (R)-pantoate-binding site is contributed by glutamine 61. Glutamine 61 is a beta-alanine binding site. An ATP-binding site is contributed by 149–152; it reads GEKD. Glutamine 155 is a binding site for (R)-pantoate. 186–189 is an ATP binding site; it reads LSSR. The tract at residues 276 to 509 is cytidylate kinase; the sequence is FLMKRRPIIA…DKIPKESEIK (234 aa).

In the N-terminal section; belongs to the pantothenate synthetase family. The protein in the C-terminal section; belongs to the cytidylate kinase family. Type 1 subfamily.

The protein localises to the cytoplasm. It carries out the reaction (R)-pantoate + beta-alanine + ATP = (R)-pantothenate + AMP + diphosphate + H(+). The enzyme catalyses CMP + ATP = CDP + ADP. It catalyses the reaction dCMP + ATP = dCDP + ADP. It participates in cofactor biosynthesis; (R)-pantothenate biosynthesis; (R)-pantothenate from (R)-pantoate and beta-alanine: step 1/1. In terms of biological role, catalyzes the condensation of pantoate with beta-alanine in an ATP-dependent reaction via a pantoyl-adenylate intermediate. Functionally, catalyzes the transfer of a phosphate group from ATP to either CMP or dCMP to form CDP or dCDP and ADP, respectively. The chain is Bifunctional pantoate ligase/cytidylate kinase from Prochlorococcus marinus (strain AS9601).